A 171-amino-acid chain; its full sequence is Myelin basic protein (171 aa).

Residue alanine 1 is modified to N-acetylalanine. Serine 7 and serine 12 each carry phosphoserine. Tyrosine 14 bears the Phosphotyrosine mark. At threonine 17 the chain carries Phosphothreonine. Serine 19 is subject to Phosphoserine. A Phosphothreonine modification is found at threonine 20. Citrulline is present on residues arginine 25 and arginine 31. Residue threonine 35 is modified to Phosphothreonine. Position 40 is a phosphoserine (serine 40). Arginine 43 and arginine 49 each carry omega-N-methylarginine. The tract at residues 44 to 115 (FFGGDRGAPK…GRGLSLSRFS (72 aa)) is disordered. Phosphoserine is present on serine 56. Tyrosine 69 is subject to Phosphotyrosine. Serine 76 is subject to Phosphoserine. 3 positions are modified to phosphothreonine: threonine 80, threonine 95, and threonine 98. Position 103 is a deamidated glutamine (glutamine 103). Residue arginine 107 is modified to Omega-N-methylarginine; alternate. Arginine 107 carries the post-translational modification Symmetric dimethylarginine; alternate. Serine 115 is modified (phosphoserine). Citrulline is present on residues arginine 122 and arginine 130. A Deamidated glutamine modification is found at glutamine 148. Arginine 160 carries the post-translational modification Citrulline. Serine 162 carries the phosphoserine modification. Serine 166 is subject to Phosphoserine; by UHMK1. Residue arginine 171 is modified to Citrulline.

The protein belongs to the myelin basic protein family. As to quaternary structure, homodimer. As in other animals, several charge isomers may be produced as a result of optional post-translational modifications, such as phosphorylation of serine or threonine residues, deamidation of glutamine or asparagine residues, citrullination and methylation of arginine residues. In terms of processing, phosphorylated by TAOK2, VRK2, MAPK11, MAPK12, MAPK14 and MINK1. Post-translationally, proteolytically cleaved in B cell lysosomes by cathepsin CTSG which degrades the major immunogenic MBP epitope and prevents the activation of MBP-specific autoreactive T cells.

It is found in the myelin membrane. Functionally, is, with PLP, the most abundant protein component of the myelin membrane in the CNS. Has a role in both the formation and stabilization of this compact multilayer arrangement of bilayers. Each splice variant and charge isomer may have a specialized function in the assembly of an optimized, biochemically functional myelin membrane. The protein is Myelin basic protein (MBP) of Pan troglodytes (Chimpanzee).